The chain runs to 314 residues: Ribonuclease Z (314 aa).

The Zn(2+) site is built by His-63, His-65, Asp-67, His-68, His-142, Asp-205, and His-263. Asp-67 serves as the catalytic Proton acceptor.

The protein belongs to the RNase Z family. As to quaternary structure, homodimer. Zn(2+) serves as cofactor.

It catalyses the reaction Endonucleolytic cleavage of RNA, removing extra 3' nucleotides from tRNA precursor, generating 3' termini of tRNAs. A 3'-hydroxy group is left at the tRNA terminus and a 5'-phosphoryl group is left at the trailer molecule.. In terms of biological role, zinc phosphodiesterase, which displays some tRNA 3'-processing endonuclease activity. Probably involved in tRNA maturation, by removing a 3'-trailer from precursor tRNA. The protein is Ribonuclease Z of Kineococcus radiotolerans (strain ATCC BAA-149 / DSM 14245 / SRS30216).